We begin with the raw amino-acid sequence, 262 residues long: Light-harvesting complex-like protein 3 isotype 1, chloroplastic (262 aa).

The transit peptide at 1 to 39 directs the protein to the chloroplast; the sequence is MALFSPPISSSSLQNPNFIPKFSFSLLSSNRFSLLSVTR. The next 2 membrane-spanning stretches (helical) occupy residues 180–200 and 202–222; these read AAMIGFFMAYFVDSLTGVGLV and QMGNFFCKTLLFVAVAGVLFI.

As to quaternary structure, interacts with GGR. Forms homodimer, and heterodimer with LIL3.2. Expressed in photosynthetically active tissues (at protein level).

It localises to the plastid. It is found in the chloroplast thylakoid membrane. In terms of biological role, light-harvesting-like protein required for biosynthesis of phytylated chlorophylls and alpha-tocopherol in green seedlings. Functions by anchoring geranylgeranyl reductase (GGR) in the thylakoid membrane, leading to the stabilization of GGR activity. Binds chlorophyll a in the thylakoid membrane. Plays a role in the regulation of chlorophyll biosynthesis under light stress and under standard growth conditions. This chain is Light-harvesting complex-like protein 3 isotype 1, chloroplastic (LIL3.1), found in Arabidopsis thaliana (Mouse-ear cress).